We begin with the raw amino-acid sequence, 909 residues long: Yellow mounds protein A (909 aa).

The MIF4G domain occupies 7–283 (LNVVSRILNK…KNLFELKNNK (277 aa)). Disordered stretches follow at residues 178-232 (SMGG…NNNI), 415-439 (MESSSNNNNSNSQLQFSLSSSSGIK), 460-537 (INLP…SSAP), 627-689 (VPPV…SEAR), and 704-774 (SLSG…AKKH). Acidic residues predominate over residues 204-215 (DDDDHDEEDNEN). Composition is skewed to low complexity over residues 216-231 (NYENTTSTTNNINNNN) and 417-436 (SSSNNNNSNSQLQFSLSSSS). A compositionally biased stretch (polar residues) spans 473 to 490 (RSNSPSLSSVVKQPQSQQ). Residues 491-525 (NNNNNNNNNNNNTTITTTTSSNNNINNNNNNNNNN) are compositionally biased toward low complexity. A compositionally biased stretch (polar residues) spans 721 to 738 (STPTLKSTPAIVQNGGSI). Residues 739–756 (TSTSSSSSSSSSSSSSTT) show a composition bias toward low complexity. The stretch at 845-877 (TMLFDLEEMAQEQQNLEKQNDQQQNLLTQNNQI) forms a coiled coil.

In terms of biological role, plays as essential role in regulating terminal differentiation. The protein is Yellow mounds protein A (yelA) of Dictyostelium discoideum (Social amoeba).